We begin with the raw amino-acid sequence, 536 residues long: Membrane protein insertase YidC (536 aa).

The next 5 membrane-spanning stretches (helical) occupy residues leucine 7 to phenylalanine 27, phenylalanine 332 to valine 352, methionine 411 to phenylalanine 431, leucine 449 to leucine 469, and phenylalanine 488 to tryptophan 508.

This sequence belongs to the OXA1/ALB3/YidC family. Type 1 subfamily. In terms of assembly, interacts with the Sec translocase complex via SecD. Specifically interacts with transmembrane segments of nascent integral membrane proteins during membrane integration.

It is found in the cell inner membrane. Its function is as follows. Required for the insertion and/or proper folding and/or complex formation of integral membrane proteins into the membrane. Involved in integration of membrane proteins that insert both dependently and independently of the Sec translocase complex, as well as at least some lipoproteins. Aids folding of multispanning membrane proteins. In Haemophilus ducreyi (strain 35000HP / ATCC 700724), this protein is Membrane protein insertase YidC.